The sequence spans 466 residues: Citrate synthase, mitochondrial (466 aa).

Residues 1–27 constitute a mitochondrion transit peptide; it reads MALLTAAARLFGAKNASCLVLAARHAS. The SIFI-degron signature appears at 2–21; that stretch reads ALLTAAARLFGAKNASCLVL. Lysine 57 carries the N6-succinyllysine modification. Lysine 76 is subject to N6-acetyllysine; alternate. Lysine 76 bears the N6-succinyllysine; alternate mark. 2 positions are modified to N6-succinyllysine: lysine 103 and lysine 193. A Phosphoserine modification is found at serine 226. Histidine 301 is an active-site residue. Lysine 321 and lysine 327 each carry N6-acetyllysine; alternate. Residues lysine 321 and lysine 327 each carry the N6-succinyllysine; alternate modification. Histidine 347 is an active-site residue. Arginine 356 contributes to the oxaloacetate binding site. Position 375 is an N6-acetyllysine; alternate (lysine 375). Residue lysine 375 is modified to N6-succinyllysine; alternate. N6-acetyllysine is present on lysine 382. Lysine 393 carries the post-translational modification N6-acetyllysine; alternate. An N6-succinyllysine; alternate modification is found at lysine 393. Residue lysine 395 is modified to N6,N6,N6-trimethyllysine. Residue aspartate 402 is part of the active site. 2 residues coordinate oxaloacetate: arginine 428 and arginine 448. N6-succinyllysine is present on lysine 450. Lysine 459 is modified (N6-acetyllysine; alternate). Residue lysine 459 is modified to N6-succinyllysine; alternate.

It belongs to the citrate synthase family. Homodimer. Methylated. Trimethylation at Lys-395 by CSKMT decreases citrate synthase activity. In terms of processing, in response to mitochondrial stress, the precursor protein is ubiquitinated by the SIFI complex in the cytoplasm before mitochondrial import, leading to its degradation. Within the SIFI complex, UBR4 initiates ubiquitin chain that are further elongated or branched by KCMF1.

It is found in the mitochondrion matrix. It carries out the reaction oxaloacetate + acetyl-CoA + H2O = citrate + CoA + H(+). Its pathway is carbohydrate metabolism; tricarboxylic acid cycle; isocitrate from oxaloacetate: step 1/2. In terms of biological role, key enzyme of the Krebs tricarboxylic acid cycle which catalyzes the synthesis of citrate from acetyl coenzyme A and oxaloacetate. In Bos taurus (Bovine), this protein is Citrate synthase, mitochondrial (CS).